Reading from the N-terminus, the 452-residue chain is Probable glycine dehydrogenase (decarboxylating) subunit 1 (452 aa).

This sequence belongs to the GcvP family. N-terminal subunit subfamily. In terms of assembly, the glycine cleavage system is composed of four proteins: P, T, L and H. In this organism, the P 'protein' is a heterodimer of two subunits.

The enzyme catalyses N(6)-[(R)-lipoyl]-L-lysyl-[glycine-cleavage complex H protein] + glycine + H(+) = N(6)-[(R)-S(8)-aminomethyldihydrolipoyl]-L-lysyl-[glycine-cleavage complex H protein] + CO2. The glycine cleavage system catalyzes the degradation of glycine. The P protein binds the alpha-amino group of glycine through its pyridoxal phosphate cofactor; CO(2) is released and the remaining methylamine moiety is then transferred to the lipoamide cofactor of the H protein. This Alcanivorax borkumensis (strain ATCC 700651 / DSM 11573 / NCIMB 13689 / SK2) protein is Probable glycine dehydrogenase (decarboxylating) subunit 1.